A 1147-amino-acid polypeptide reads, in one-letter code: SR-related and CTD-associated factor 4 (1147 aa).

In terms of domain architecture, CID spans 1-139; it reads MDAVNAFNQE…PLLDMAAGTS (139 aa). The residue at position 49 (Lys-49) is an N6-acetyllysine. Disordered regions lie at residues 145-179, 235-254, 269-331, and 424-502; these read AENVTNNEGSPPPPVKVSSEPPTQATPNSVPAVPQ, KTTPTQPSEQKAAFPPPEQK, DEPE…QQPA, and VKRH…KPET. Ser-154 carries the post-translational modification Phosphoserine. Low complexity-rich tracts occupy residues 283–292 and 299–310; these read TAVTTTAPAA and TATVPAAAAPAA. Over residues 424–433 the composition is skewed to basic and acidic residues; that stretch reads VKRHMSDNRK. Positions 434 to 475 are enriched in basic residues; the sequence is SRSRSASRSPKRRRSRSGSRSRRSRHRRSRSRSRDRRRHSPR. Residues 477–492 show a composition bias toward basic and acidic residues; sequence RSQERRDREKERERRQ. In terms of domain architecture, RRM spans 508-582; it reads TTLWVGQLDK…KSIKIAWALN (75 aa). 2 disordered regions span residues 629–661 and 879–1147; these read DWKGIPKKPENEVAQNGGAETSHTEPVSPIPKP and RPMP…EAPR. Ser-656 is subject to Phosphoserine. The span at 879–913 shows a compositional bias: pro residues; that stretch reads RPMPPHMMHRGPPPGPGGFAMPPPHGMKGPFPPHG. The segment covering 941 to 965 has biased composition (low complexity); the sequence is QQPPQQPQQQPQPQAPQQPQQQQQQ. The span at 966–977 shows a compositional bias: pro residues; the sequence is QPPPSQQPPPTQ. Ser-1004 is modified (phosphoserine). The span at 1009–1085 shows a compositional bias: basic and acidic residues; that stretch reads VENDRERYGN…RGKEKPEVTD (77 aa).

As to quaternary structure, interacts with POLR2A; via C-terminal heptapeptide repeat domain (CTD) phosphorylated at 'Ser-2' and 'Ser-5'.

It localises to the nucleus. Anti-terminator protein required to prevent early mRNA termination during transcription. Together with SCAF8, acts by suppressing the use of early, alternative poly(A) sites, thereby preventing the accumulation of non-functional truncated proteins. Mechanistically, associates with the phosphorylated C-terminal heptapeptide repeat domain (CTD) of the largest RNA polymerase II subunit (POLR2A), and subsequently binds nascent RNA upstream of early polyadenylation sites to prevent premature mRNA transcript cleavage and polyadenylation. Independently of SCAF8, also acts as a suppressor of transcriptional readthrough. This Homo sapiens (Human) protein is SR-related and CTD-associated factor 4.